We begin with the raw amino-acid sequence, 198 residues long: Imidazoleglycerol-phosphate dehydratase (198 aa).

Belongs to the imidazoleglycerol-phosphate dehydratase family.

It localises to the cytoplasm. It carries out the reaction D-erythro-1-(imidazol-4-yl)glycerol 3-phosphate = 3-(imidazol-4-yl)-2-oxopropyl phosphate + H2O. It participates in amino-acid biosynthesis; L-histidine biosynthesis; L-histidine from 5-phospho-alpha-D-ribose 1-diphosphate: step 6/9. The sequence is that of Imidazoleglycerol-phosphate dehydratase from Magnetococcus marinus (strain ATCC BAA-1437 / JCM 17883 / MC-1).